Here is a 226-residue protein sequence, read N- to C-terminus: uncharacterized protein (226 aa).

This is an uncharacterized protein from Mycobacterium bovis (strain ATCC BAA-935 / AF2122/97).